Here is a 334-residue protein sequence, read N- to C-terminus: Holliday junction branch migration complex subunit RuvB (334 aa).

The tract at residues 4–184 (ADRIISASPQ…FGIVQRLEFY (181 aa)) is large ATPase domain (RuvB-L). ATP is bound by residues Ile23, Arg24, Gly65, Lys68, Thr69, Thr70, 131–133 (EDY), Arg174, Tyr184, and Arg221. Thr69 contacts Mg(2+). The tract at residues 185-255 (NVDDLTSIVK…IAKQALVMLD (71 aa)) is small ATPAse domain (RuvB-S). A head domain (RuvB-H) region spans residues 258-334 (PQGFDFMDIK…YAHLGISLSE (77 aa)). Residues Arg294, Arg313, and Arg318 each coordinate DNA.

The protein belongs to the RuvB family. Homohexamer. Forms an RuvA(8)-RuvB(12)-Holliday junction (HJ) complex. HJ DNA is sandwiched between 2 RuvA tetramers; dsDNA enters through RuvA and exits via RuvB. An RuvB hexamer assembles on each DNA strand where it exits the tetramer. Each RuvB hexamer is contacted by two RuvA subunits (via domain III) on 2 adjacent RuvB subunits; this complex drives branch migration. In the full resolvosome a probable DNA-RuvA(4)-RuvB(12)-RuvC(2) complex forms which resolves the HJ.

It localises to the cytoplasm. It carries out the reaction ATP + H2O = ADP + phosphate + H(+). The RuvA-RuvB-RuvC complex processes Holliday junction (HJ) DNA during genetic recombination and DNA repair, while the RuvA-RuvB complex plays an important role in the rescue of blocked DNA replication forks via replication fork reversal (RFR). RuvA specifically binds to HJ cruciform DNA, conferring on it an open structure. The RuvB hexamer acts as an ATP-dependent pump, pulling dsDNA into and through the RuvAB complex. RuvB forms 2 homohexamers on either side of HJ DNA bound by 1 or 2 RuvA tetramers; 4 subunits per hexamer contact DNA at a time. Coordinated motions by a converter formed by DNA-disengaged RuvB subunits stimulates ATP hydrolysis and nucleotide exchange. Immobilization of the converter enables RuvB to convert the ATP-contained energy into a lever motion, pulling 2 nucleotides of DNA out of the RuvA tetramer per ATP hydrolyzed, thus driving DNA branch migration. The RuvB motors rotate together with the DNA substrate, which together with the progressing nucleotide cycle form the mechanistic basis for DNA recombination by continuous HJ branch migration. Branch migration allows RuvC to scan DNA until it finds its consensus sequence, where it cleaves and resolves cruciform DNA. The polypeptide is Holliday junction branch migration complex subunit RuvB (Haemophilus ducreyi (strain 35000HP / ATCC 700724)).